The primary structure comprises 370 residues: tRNA-specific 2-thiouridylase MnmA (370 aa).

ATP is bound by residues 9–16 (GISGGVDS) and M35. The interaction with target base in tRNA stretch occupies residues 107-109 (NPD). The active-site Nucleophile is the C112. An intrachain disulfide couples C112 to C209. ATP is bound at residue G137. An interaction with tRNA region spans residues 159-161 (KDQ). C209 (cysteine persulfide intermediate) is an active-site residue.

The protein belongs to the MnmA/TRMU family.

It localises to the cytoplasm. The catalysed reaction is S-sulfanyl-L-cysteinyl-[protein] + uridine(34) in tRNA + AH2 + ATP = 2-thiouridine(34) in tRNA + L-cysteinyl-[protein] + A + AMP + diphosphate + H(+). In terms of biological role, catalyzes the 2-thiolation of uridine at the wobble position (U34) of tRNA, leading to the formation of s(2)U34. The polypeptide is tRNA-specific 2-thiouridylase MnmA (Mycoplasma pneumoniae (strain ATCC 29342 / M129 / Subtype 1) (Mycoplasmoides pneumoniae)).